Here is a 1245-residue protein sequence, read N- to C-terminus: MDSIVNVVEDDVKYAQRVTSFSSPQNANVKVFTIPRHSFTAFRLSYVSPTELSACSQVTLLGGIPKQWYADQNNQVWKLLTKISLRKVRKQSDMLRRYGYGTIYKKRVGKIPTALYLRKHFTWSYEDNTSIHNGHRLKEAEMEMKRTRSSPVQKSEYKLSLPRRCRSSSDQNFMRQELLKEKKSELSRNNSLPLIDTAQAVDIHPVLHEEDQENTNKRNKSLLSNLKRKDLGESKSISRKDYSHFDRIPSPSSARSVGETDFNYNREPSEDTLRYPDSIIEVTNRTSPAPNSILSRSGQFVNSNDLSDGFSTSNTINNVGLNANEKIFFNALQSMEKENLMLWKTSQKYGTYLDERRKSADAFQKRERGSCVDIGKLHSSHLPFINILPPWPTELTEEERIIHDRLASKHSHHIRKHVHNARNKTSCKIKDSVGTFLGMTNSLTNKATVKKRTGQILKKEKMLVMVKEAIQNKVPLPNFSENECFDTRVSERWKEYIVIARSTGRFDPPILLQFYRHRHIPEIEDISSIATKYHRNPLDFFLSRNCIVKFYSSLDKTISIQKPDKRLGGFIDESIEKKDELKHYSPIKIFILRCSSIRSSGRWYKFLLESLDRQLFTPAINLKIPLTEISIKINLNEIIFQKLIDLGKQEKDRLKICFLQRGYKIFQHPILRYFTVAILEKLKLAHYDYLIRKWDTENPVLGCALKRYDRLEWIPCDEDSLVTGIFAFCQSHLIQYRPIANRLRETKSLEGKCLKEPTPIEGFLIRLTDKYGSARTNFGKYSISTAYFFTCENLLFSMKAYRANPPLPIDSMIDDTSTEIEKEEIWKQWKKIPEVYEQQPYPLDTNDHIEWMNCQTTQSEYDSRDFYAFHCFHRRIDQILKTDNVIDLTEVKDIYQGTRTDYEADKIKYGVYKEASEIFWHRNYEIDDVSRSVINIETSNGLLLKLLATSATVAEEWVIKLKQMISYWKNKQREDTERLLKIRRSNAGLLMLNGEEETKIGENTLRWIVEHGRADEQTFNANGISLSRPLIQKGPLYQKPHKHSVFSKYYVVLISGFIVLFHCFHRSTTGFAKEVLEYAHYVTIPIDDCYLYSGTTTELDLLQRDRTFDEINYGSHALPRVYGDGWRSVEDESSRCFTLWFGTRRALSSNRLQKKGNEKQYTQDYGRQDNNIDPPSAPEADLNNSNVPSNTDKIHFTKKLGVSGKSMVFMARSRQERDLWVMSIYYELERLRRTASTSNSRNQTM.

Residues 207–270 are disordered; sequence LHEEDQENTN…DFNYNREPSE (64 aa). Residues 227-247 are compositionally biased toward basic and acidic residues; it reads KRKDLGESKSISRKDYSHFDR. The short motif at 385–399 is the PxP element; it reads INILPPWPTELTEEE. The PH domain maps to 1030-1229; the sequence is LIQKGPLYQK…WVMSIYYELE (200 aa). Residues 1154–1192 are disordered; that stretch reads KKGNEKQYTQDYGRQDNNIDPPSAPEADLNNSNVPSNTD. Composition is skewed to polar residues over residues 1159–1173 and 1182–1191; these read KQYT…NNID and LNNSNVPSNT.

Belongs to the SPO71 family. Interacts (via PxP motif) with VPS13 (via SHR-BD domain); during prospore membrane formation.

The protein localises to the prospore membrane. In terms of biological role, recruits the lipid transfer protein VPS13 to the prospore membrane during sporulation, thereby aiding prospore membrane formation. This chain is Prospore membrane adapter protein SPO71 (SPO71), found in Saccharomyces cerevisiae (strain ATCC 204508 / S288c) (Baker's yeast).